Here is a 1451-residue protein sequence, read N- to C-terminus: Murinoglobulin-2 (1451 aa).

Residues 1 to 27 (MWKSRRAQLCLFSVLLAFLPSASSLNG) form the signal peptide. 3 disulfide bridges follow: Cys-48/Cys-86, Cys-251/Cys-276, and Cys-269/Cys-288. Residue Asn-55 is glycosylated (N-linked (GlcNAc...) asparagine). 3 N-linked (GlcNAc...) asparagine glycosylation sites follow: Asn-294, Asn-313, and Asn-500. 3 cysteine pairs are disulfide-bonded: Cys-461–Cys-555, Cys-587–Cys-773, and Cys-634–Cys-680. Positions 677-734 (PKICFDSAPMSGPRGKFDLAFSSEVSGTLQKGSSKRPQPEEPPREDPPPKDPLAETIR) are bait region. The disordered stretch occupies residues 703–728 (GTLQKGSSKRPQPEEPPREDPPPKDP). Positions 713-728 (PQPEEPPREDPPPKDP) are enriched in basic and acidic residues. Residues Asn-749, Asn-776, and Asn-871 are each glycosylated (N-linked (GlcNAc...) asparagine). Cystine bridges form between Cys-849-Cys-885, Cys-923-Cys-1274, Cys-1081-Cys-1104, and Cys-1298-Cys-1444. A cross-link (isoglutamyl cysteine thioester (Cys-Gln)) is located at residues 974-977 (CGEQ). Asn-1401 carries an N-linked (GlcNAc...) asparagine glycan.

Belongs to the protease inhibitor I39 (alpha-2-macroglobulin) family. In terms of assembly, monomer. As to expression, plasma.

The protein resides in the secreted. Its function is as follows. A proteinase activates the inhibitor by specific proteolysis in the bait region, which, by an unknown mechanism leads to reaction at the cysteinyl-glutamyl internal thiol ester site and to a conformational change, whereby the proteinase is trapped and/or covalently bound to the inhibitor. While in the tetrameric proteinase inhibitors steric inhibition is sufficiently strong, monomeric forms need a covalent linkage between the activated glutamyl residue of the original thiol ester and a terminal amino group of a lysine or another nucleophilic group on the proteinase, for inhibition to be effective. This Mus musculus (Mouse) protein is Murinoglobulin-2 (Mug2).